Consider the following 397-residue polypeptide: Formate-dependent phosphoribosylglycinamide formyltransferase (397 aa).

N(1)-(5-phospho-beta-D-ribosyl)glycinamide is bound by residues 22 to 23 and glutamate 82; that span reads EL. Residues arginine 114, lysine 155, 160 to 165, 195 to 198, and glutamate 203 contribute to the ATP site; these read SSGKGQ and EGFV. Positions 119 to 312 constitute an ATP-grasp domain; that stretch reads CLAAEELSLP…EFALHARAIL (194 aa). Positions 271 and 283 each coordinate Mg(2+). N(1)-(5-phospho-beta-D-ribosyl)glycinamide-binding positions include aspartate 290, lysine 360, and 367–368; that span reads RR.

Belongs to the PurK/PurT family. Homodimer.

The catalysed reaction is N(1)-(5-phospho-beta-D-ribosyl)glycinamide + formate + ATP = N(2)-formyl-N(1)-(5-phospho-beta-D-ribosyl)glycinamide + ADP + phosphate + H(+). It participates in purine metabolism; IMP biosynthesis via de novo pathway; N(2)-formyl-N(1)-(5-phospho-D-ribosyl)glycinamide from N(1)-(5-phospho-D-ribosyl)glycinamide (formate route): step 1/1. In terms of biological role, involved in the de novo purine biosynthesis. Catalyzes the transfer of formate to 5-phospho-ribosyl-glycinamide (GAR), producing 5-phospho-ribosyl-N-formylglycinamide (FGAR). Formate is provided by PurU via hydrolysis of 10-formyl-tetrahydrofolate. In Alcanivorax borkumensis (strain ATCC 700651 / DSM 11573 / NCIMB 13689 / SK2), this protein is Formate-dependent phosphoribosylglycinamide formyltransferase.